A 413-amino-acid polypeptide reads, in one-letter code: Peptide chain release factor 1, mitochondrial (413 aa).

Residues 1–40 (MRVLIRPNFLSNLIRYCSRGTHSHDRSLRSVLSSNMIRLY) constitute a mitochondrion transit peptide. Position 287 is an N5-methylglutamine (Q287).

This sequence belongs to the prokaryotic/mitochondrial release factor family. Post-translationally, methylation increases the termination efficiency of RF1. As to expression, mostly expressed in seedlings, stems and adult plants, and, to a lower extent, in siliques. Barely detected in etiolated seedlings and roots.

It localises to the mitochondrion. Peptide chain release factor 1 directs the termination of translation in response to the peptide chain termination codons UAG and UAA in mitochondria. This Arabidopsis thaliana (Mouse-ear cress) protein is Peptide chain release factor 1, mitochondrial.